Consider the following 549-residue polypeptide: Adhesion G protein-coupled receptor G3 (549 aa).

A signal peptide spans 1–20 (MATPRGLGALLLLLLLPTSG). The Extracellular segment spans residues 21–270 (QEKPTEGPRN…DQSTVHILTR (250 aa)). N-linked (GlcNAc...) asparagine glycans are attached at residues N98, N144, and N210. A GAIN-B domain is found at 107-262 (FYFSLEPSQV…ALLLRPTLDQ (156 aa)). 2 cysteine pairs are disulfide-bonded: C215-C244 and C233-C246. Positions 215 to 262 (CVFWDVTKGTTGDWSSEGCSTEVRPEGTVCCCDHLTFFALLLRPTLDQ) are GPS. The interval 251–259 (FFALLLRPT) is stachel. A helical transmembrane segment spans residues 271 to 295 (ISQAGCGVSMIFLAFTIILYAFLRL). At 296 to 304 (SRERFKSED) the chain is on the cytoplasmic side. A helical transmembrane segment spans residues 305–326 (APKIHVALGGSLFLLNLAFLVN). The Extracellular segment spans residues 327 to 338 (VGSGSKGSDAAC). A disulfide bridge links C338 with C420. A helical transmembrane segment spans residues 339–364 (WARGAVFHYFLLCAFTWMGLEAFHLY). Topologically, residues 365-378 (LLAVRVFNTYFGHY) are cytoplasmic. The helical transmembrane segment at 379–400 (FLKLSLVGWGLPALMVIGTGSA) threads the bilayer. Residues 401 to 428 (NSYGLYTIRDRENRTSLELCWFREGTTM) are Extracellular-facing. N413 carries an N-linked (GlcNAc...) asparagine glycan. The helical transmembrane segment at 429–454 (YALYITVHGYFLITFLFGMVVLALVV) threads the bilayer. The Cytoplasmic portion of the chain corresponds to 455–474 (WKIFTLSRATAVKERGKNRK). The helical transmembrane segment at 475–495 (KVLTLLGLSSLVGVTWGLAIF) threads the bilayer. Residues 496 to 501 (TPLGLS) lie on the Extracellular side of the membrane. The chain crosses the membrane as a helical span at residues 502–525 (TVYIFALFNSLQGVFICCWFTILY). Cortisol is bound at residue N510. Residues 526–549 (LPSQSTTVSSSTARLDQAHSASQE) are Cytoplasmic-facing.

Belongs to the G-protein coupled receptor 2 family. Adhesion G-protein coupled receptor (ADGR) subfamily. Heterodimer of 2 chains generated by proteolytic processing; the large extracellular N-terminal fragment and the membrane-bound C-terminal fragment predominantly remain associated and non-covalently linked. Interacts with PRTN3; this interaction induces the activation of PAR2. Interacts with GNAO1 (when palmitoylated). Post-translationally, autoproteolytically processed at the GPS region of the GAIN-B domain; this cleavage modulates receptor activity. In terms of processing, O- and N-glycosylated. As to expression, expressed in cultured primary dermal lymphatic endothelial cells. Highly expressed in polymorphonuclear cells (PMNs) including neutrophilic, eosinophilic, and basophilic granulocytes.

Its subcellular location is the cell membrane. Its activity is regulated as follows. Forms a heterodimer of 2 chains generated by proteolytic processing that remain associated through non-covalent interactions mediated by the GAIN-B domain. In the inactivated receptor, the Stachel sequence (also named stalk) is embedded in the GAIN-B domain, where it adopts a beta-strand conformation. On activation, the Stachel moves into the 7 transmembrane region and adopts a twisted hook-shaped configuration that forms contacts within the receptor, leading to coupling of a G-alpha protein, which activates signaling. The cleaved GAIN-B and N-terminal domains can then dissociate from the rest of the receptor. Functionally, adhesion G-protein coupled receptor (aGPCR) for glucocorticoid hormones such as cortisol, cortisone and 11-deoxycortisol. Ligand binding causes a conformation change that triggers signaling via guanine nucleotide-binding proteins (G proteins) and modulates the activity of downstream effectors, such as adenylate cyclase. ADGRG3/GPR97 is coupled to G(o)/GNAO1 G proteins and mediates signaling by inhibiting adenylate cyclase activity. May also signal through G-alpha(q)-proteins; additional evidence are however required to confirm this result in vivo. Plays a role in the regulation of various processes including B-cell development, inflammation or innate immunity. Regulates migration of lymphatic endothelial cells in vitro via the small GTPases RhoA and CDC42. Antibody ligation leads to the production and activation of antimicrobial mediators like reactive oxygen species (ROS) and myeloperoxidase (MPO) as well as enhanced bacteria uptake and killing by granulocytes. Additionally, collaborates with protease-activated receptor 2/PAR2 to stimulate neutrophil-driven antimicrobial responses and endothelial cell activation. This chain is Adhesion G protein-coupled receptor G3, found in Homo sapiens (Human).